Reading from the N-terminus, the 212-residue chain is MKSSLTLLFLAAIGYTIAYPPPSDYDSGYGGGGGGGGGGGYGGWCGGSDCYGGGNGGGGGGGGGNGGEYGGGYGDVYGGSYGGGSYGGGGYGDVYGGGCGGPDCYGGGNGGGNGGGGGCNGGGCGGGPDFYGKGYEDSYGGDSYGNDYYGDSNGRKNGHGKGGKGGNGGGGGKGGGKGGGNGKGNGKGGGGKNGGGKGGNGGKGGSYAPSYY.

An N-terminal signal peptide occupies residues M1–S27. The disordered stretch occupies residues R155–Y212. A compositionally biased stretch (gly residues) spans G163–G205.

In terms of tissue distribution, detected only in mature female parasites.

This Schistosoma japonicum (Blood fluke) protein is Eggshell protein 1 (ESG-1).